The chain runs to 257 residues: Phycoerythrobilin:ferredoxin oxidoreductase (257 aa).

It belongs to the HY2 family.

It carries out the reaction (3Z)-phycoerythrobilin + oxidized 2[4Fe-4S]-[ferredoxin] = 15,16-dihydrobiliverdin + reduced 2[4Fe-4S]-[ferredoxin] + 2 H(+). Its function is as follows. Catalyzes the two-electron reduction of the C2 and C3(1) diene system of 15,16-dihydrobiliverdin. This chain is Phycoerythrobilin:ferredoxin oxidoreductase, found in Synechococcus sp. (strain CC9311).